The primary structure comprises 151 residues: Large ribosomal subunit protein bL9 (151 aa).

This sequence belongs to the bacterial ribosomal protein bL9 family.

Its function is as follows. Binds to the 23S rRNA. The sequence is that of Large ribosomal subunit protein bL9 from Mycolicibacterium gilvum (strain PYR-GCK) (Mycobacterium gilvum (strain PYR-GCK)).